Consider the following 320-residue polypeptide: Ferrochelatase (320 aa).

Fe cation is bound by residues H194 and E275.

Belongs to the ferrochelatase family.

It is found in the cytoplasm. The catalysed reaction is heme b + 2 H(+) = protoporphyrin IX + Fe(2+). The protein operates within porphyrin-containing compound metabolism; protoheme biosynthesis; protoheme from protoporphyrin-IX: step 1/1. Its function is as follows. Catalyzes the ferrous insertion into protoporphyrin IX. The protein is Ferrochelatase of Serratia proteamaculans (strain 568).